Consider the following 188-residue polypeptide: Peptidyl-tRNA hydrolase (188 aa).

Tyrosine 14 lines the tRNA pocket. The Proton acceptor role is filled by histidine 19. TRNA is bound by residues tyrosine 64, asparagine 66, and asparagine 112.

This sequence belongs to the PTH family. In terms of assembly, monomer.

It is found in the cytoplasm. The catalysed reaction is an N-acyl-L-alpha-aminoacyl-tRNA + H2O = an N-acyl-L-amino acid + a tRNA + H(+). Its function is as follows. Hydrolyzes ribosome-free peptidyl-tRNAs (with 1 or more amino acids incorporated), which drop off the ribosome during protein synthesis, or as a result of ribosome stalling. Functionally, catalyzes the release of premature peptidyl moieties from peptidyl-tRNA molecules trapped in stalled 50S ribosomal subunits, and thus maintains levels of free tRNAs and 50S ribosomes. This is Peptidyl-tRNA hydrolase from Bacillus pumilus (strain SAFR-032).